The chain runs to 469 residues: MKSTVEQLSPTRVRINVEVPFTELEPDFDRAFKELAKQVRLPGFRPGKAPRKLLEARIGRGAVLEQVVNDALPSRYSEAVSTSDLKPLGQPEIEITKLEDNEELVFTAEVDIRPEITLPELESLKITVDPIEVTDEEVDAELQSLRARFGTLKGVERGVQEGDFVSIDLSATVDGNEVPEAATEGLSHEVGSGQLIDGLDEAIIGLKADESKTFTTKLVAGEYAGQDAEVTVTVKSVKERELPEPDDEFAQLASEYDTIEELRNSLVDQVRRLKSVQQAEQIRDKAIEALLEQTEVPLPEKIVQAQIDEVVHNAIHGLDHDEEKFAEQLAEQGSSREEFDAETRTEAEKAVKTQLLMDAVADKLEIQVSQNDLTERLVLMSRQYGLEPQQLIQILQQNNQLPAMFADVRRGLTIAAVVHAATVTDTDGNVIDTMEFFGPSGEQAAEDSAEESTDAAEGEAAEDADDTDK.

A PPIase FKBP-type domain is found at 162 to 243; that stretch reads GDFVSIDLSA…VKSVKERELP (82 aa). The interval 438 to 469 is disordered; that stretch reads GPSGEQAAEDSAEESTDAAEGEAAEDADDTDK. Residues 444–469 show a composition bias toward acidic residues; the sequence is AAEDSAEESTDAAEGEAAEDADDTDK.

Belongs to the FKBP-type PPIase family. Tig subfamily.

It is found in the cytoplasm. The enzyme catalyses [protein]-peptidylproline (omega=180) = [protein]-peptidylproline (omega=0). Its function is as follows. Involved in protein export. Acts as a chaperone by maintaining the newly synthesized protein in an open conformation. Functions as a peptidyl-prolyl cis-trans isomerase. The polypeptide is Trigger factor (Mycolicibacterium smegmatis (strain ATCC 700084 / mc(2)155) (Mycobacterium smegmatis)).